We begin with the raw amino-acid sequence, 550 residues long: Cytochrome P450 monooxygenase FFUJ_09176 (550 aa).

An N-terminal signal peptide occupies residues methionine 1 to serine 31. Positions phenylalanine 430–serine 441 are enriched in basic and acidic residues. Residues phenylalanine 430 to valine 451 are disordered. Cysteine 466 provides a ligand contact to heme.

This sequence belongs to the cytochrome P450 family.

Cytochrome P450 monooxygenase; part of the DMATS1 gene cluster that mediates the biosynthesis of a reversely N-prenylated monomeric L-tryptophan (r-N-DMAT). Seems not to contribute to the final DMATS1 product. The polypeptide is Cytochrome P450 monooxygenase FFUJ_09176 (Gibberella fujikuroi (strain CBS 195.34 / IMI 58289 / NRRL A-6831) (Bakanae and foot rot disease fungus)).